A 901-amino-acid polypeptide reads, in one-letter code: Cyanophycin synthetase (901 aa).

The ATP-grasp domain occupies K224–F478. Position 493-499 (G493–T499) interacts with ATP.

The protein in the C-terminal section; belongs to the MurCDEF family. Homodimer.

It catalyses the reaction [L-4-(L-arginin-2-N-yl)aspartate](n) + L-aspartate + ATP = [L-4-(L-arginin-2-N-yl)aspartate](n)-L-aspartate + ADP + phosphate + H(+). The enzyme catalyses [L-4-(L-arginin-2-N-yl)aspartate](n)-L-aspartate + L-arginine + ATP = [L-4-(L-arginin-2-N-yl)aspartate](n+1) + ADP + phosphate + H(+). Catalyzes the ATP-dependent polymerization of arginine and aspartate to multi-L-arginyl-poly-L-aspartic acid (cyanophycin; a water-insoluble reserve polymer). The chain is Cyanophycin synthetase (cphA) from Trichormus variabilis (strain ATCC 29413 / PCC 7937) (Anabaena variabilis).